The following is an 807-amino-acid chain: Ribosome-releasing factor 2, mitochondrial (807 aa).

The N-terminal 18 residues, 1-18, are a transit peptide targeting the mitochondrion; sequence MFCRKYVFQTWKQLSRSY. The tr-type G domain maps to 27 to 315; that stretch reads AKTRNIGIIA…GITKYLPSPL (289 aa). GTP contacts are provided by residues 36-43, 100-104, and 154-157; these read AHIDAGKT, DTPGH, and NKMD.

The protein belongs to the TRAFAC class translation factor GTPase superfamily. Classic translation factor GTPase family. EF-G/EF-2 subfamily.

Its subcellular location is the mitochondrion. In terms of biological role, mitochondrial GTPase that mediates the disassembly of ribosomes from messenger RNA at the termination of mitochondrial protein biosynthesis. Not involved in the GTP-dependent ribosomal translocation step during translation elongation. This chain is Ribosome-releasing factor 2, mitochondrial, found in Candida albicans (strain SC5314 / ATCC MYA-2876) (Yeast).